The following is a 657-amino-acid chain: Pyoverdine export ATP-binding/permease protein PvdT (657 aa).

The 240-residue stretch at 6–245 (IDLRGIRKSY…RSVNPAALQA (240 aa)) folds into the ABC transporter domain. 43-50 (GASGSGKS) contributes to the ATP binding site. Helical transmembrane passes span 285 to 305 (ALTL…LAVG), 539 to 559 (IAAI…LMTV), 590 to 610 (LSVV…AALL), and 620 to 640 (LPAV…FGFM).

Belongs to the ABC transporter superfamily. Macrolide exporter (TC 3.A.1.122) family. As to quaternary structure, part of the tripartite efflux system PvdRT-OpmQ, which is composed of an inner membrane component with both ATPase and permease domains, PvdT, a periplasmic membrane fusion protein, PvdR, and an outer membrane component, OpmQ.

The protein localises to the cell inner membrane. Functionally, part of the tripartite efflux system PvdRT-OpmQ required for the secretion into the extracellular milieu of the siderophore pyoverdine (PVD), which is involved in iron acquisition. This subunit binds PVD and drives its secretion by hydrolyzing ATP. The system is responsible for export of newly synthesized PVD after the final steps of biosynthesis have taken place in the periplasm. It is also responsible for recycling of PVD after internalization of ferri-PVD into the periplasm by the outer-membrane receptor FpvA and release of iron from PVD, thus making PVD available for new cycles of iron uptake. The chain is Pyoverdine export ATP-binding/permease protein PvdT from Pseudomonas syringae pv. syringae (strain B728a).